The sequence spans 628 residues: 1-deoxy-D-xylulose-5-phosphate synthase (628 aa).

Residues histidine 72 and 113 to 115 (GHA) contribute to the thiamine diphosphate site. Aspartate 144 provides a ligand contact to Mg(2+). Thiamine diphosphate is bound by residues 145-146 (GA), asparagine 174, tyrosine 287, and glutamate 370. Position 174 (asparagine 174) interacts with Mg(2+).

Belongs to the transketolase family. DXPS subfamily. As to quaternary structure, homodimer. Mg(2+) is required as a cofactor. It depends on thiamine diphosphate as a cofactor.

The enzyme catalyses D-glyceraldehyde 3-phosphate + pyruvate + H(+) = 1-deoxy-D-xylulose 5-phosphate + CO2. It participates in metabolic intermediate biosynthesis; 1-deoxy-D-xylulose 5-phosphate biosynthesis; 1-deoxy-D-xylulose 5-phosphate from D-glyceraldehyde 3-phosphate and pyruvate: step 1/1. Functionally, catalyzes the acyloin condensation reaction between C atoms 2 and 3 of pyruvate and glyceraldehyde 3-phosphate to yield 1-deoxy-D-xylulose-5-phosphate (DXP). The sequence is that of 1-deoxy-D-xylulose-5-phosphate synthase from Prochlorococcus marinus (strain NATL2A).